The following is a 378-amino-acid chain: UPF0754 membrane protein BCQ_0944 (378 aa).

The next 2 membrane-spanning stretches (helical) occupy residues 1–21 (MNIW…GGFT) and 357–377 (YLGA…LLFL).

It belongs to the UPF0754 family.

The protein localises to the cell membrane. The chain is UPF0754 membrane protein BCQ_0944 from Bacillus cereus (strain Q1).